Here is a 347-residue protein sequence, read N- to C-terminus: Holliday junction branch migration complex subunit RuvB (347 aa).

Residues 1–185 are large ATPase domain (RuvB-L); that stretch reads MSDDPTTPEL…FGFTAHLEFY (185 aa). ATP is bound by residues Leu-24, Arg-25, Gly-66, Lys-69, Thr-70, Thr-71, 132–134, Arg-175, Tyr-185, and Arg-222; that span reads EDF. Residue Thr-70 participates in Mg(2+) binding. Residues 186–255 form a small ATPAse domain (RuvB-S) region; that stretch reads DEGELAQVLA…AVHAALELYD (70 aa). Residues 258 to 347 are head domain (RuvB-H); it reads ELGLDRLDRA…SQPPSLMDDL (90 aa). DNA-binding residues include Arg-313 and Arg-318.

Belongs to the RuvB family. Homohexamer. Forms an RuvA(8)-RuvB(12)-Holliday junction (HJ) complex. HJ DNA is sandwiched between 2 RuvA tetramers; dsDNA enters through RuvA and exits via RuvB. An RuvB hexamer assembles on each DNA strand where it exits the tetramer. Each RuvB hexamer is contacted by two RuvA subunits (via domain III) on 2 adjacent RuvB subunits; this complex drives branch migration. In the full resolvosome a probable DNA-RuvA(4)-RuvB(12)-RuvC(2) complex forms which resolves the HJ.

It localises to the cytoplasm. The catalysed reaction is ATP + H2O = ADP + phosphate + H(+). Its function is as follows. The RuvA-RuvB-RuvC complex processes Holliday junction (HJ) DNA during genetic recombination and DNA repair, while the RuvA-RuvB complex plays an important role in the rescue of blocked DNA replication forks via replication fork reversal (RFR). RuvA specifically binds to HJ cruciform DNA, conferring on it an open structure. The RuvB hexamer acts as an ATP-dependent pump, pulling dsDNA into and through the RuvAB complex. RuvB forms 2 homohexamers on either side of HJ DNA bound by 1 or 2 RuvA tetramers; 4 subunits per hexamer contact DNA at a time. Coordinated motions by a converter formed by DNA-disengaged RuvB subunits stimulates ATP hydrolysis and nucleotide exchange. Immobilization of the converter enables RuvB to convert the ATP-contained energy into a lever motion, pulling 2 nucleotides of DNA out of the RuvA tetramer per ATP hydrolyzed, thus driving DNA branch migration. The RuvB motors rotate together with the DNA substrate, which together with the progressing nucleotide cycle form the mechanistic basis for DNA recombination by continuous HJ branch migration. Branch migration allows RuvC to scan DNA until it finds its consensus sequence, where it cleaves and resolves cruciform DNA. This chain is Holliday junction branch migration complex subunit RuvB, found in Leifsonia xyli subsp. xyli (strain CTCB07).